The sequence spans 526 residues: Glutamate--tRNA ligase, mitochondrial (526 aa).

The transit peptide at 1–38 (MLSYTSCAKLICSRYIVSKISFYSLKRCNSTAVVRTRF) directs the protein to the mitochondrion. Residue 37-39 (RFA) coordinates L-glutamate. A 'HIGH' region motif is present at residues 42–50 (PTGFLHLGS). H47 is a binding site for ATP. Residues E73, 222 to 226 (YHFAN), and R240 contribute to the L-glutamate site. Residues E243 and 278–282 (KLSKR) contribute to the ATP site. The short motif at 278–282 (KLSKR) is the 'KMSKS' region element.

This sequence belongs to the class-I aminoacyl-tRNA synthetase family. Glutamate--tRNA ligase type 1 subfamily.

It localises to the mitochondrion. The enzyme catalyses tRNA(Glu) + L-glutamate + ATP = L-glutamyl-tRNA(Glu) + AMP + diphosphate. Catalyzes the attachment of glutamate to tRNA(Glu) in a two-step reaction: glutamate is first activated by ATP to form Glu-AMP and then transferred to the acceptor end of tRNA(Glu). This chain is Glutamate--tRNA ligase, mitochondrial (mse1), found in Schizosaccharomyces pombe (strain 972 / ATCC 24843) (Fission yeast).